We begin with the raw amino-acid sequence, 118 residues long: MPFSKLGRNKSQRRALLRTLMTDLIVNEQIITTESKAKELQRLADKMITLAKKGTLHTRRQAARHLFDEKINEETTVLQKLFQKLASQYLNCQGGYTRVIKTVPRRGDAAPMAIIAFA.

The protein belongs to the bacterial ribosomal protein bL17 family. Part of the 50S ribosomal subunit. Contacts protein L32.

This is Large ribosomal subunit protein bL17 from Phytoplasma australiense.